Consider the following 430-residue polypeptide: MSIIDIANNILRKYCLCDRCLGRLFASLGRGLSNDERGKAIKIALVLELHKRYLDGDKDSLKQLVELSPNIGPIAVNLIKNLGIEIEYTPRTCFICDNKINDIIDTYSQRIADIINERHINSFVLGIRGVTSYIRKEESIANEFKLLYWENIKRELKREIGKKIQMMTNAKVDFLNPEAMIIIDIDRDRIYIESPSLLIYGRYWKLGRMISQNIWLTKNGVKKYPLSIEEIAKMLVKDGFGDDVVLHIAGREDVDVRTLGSGRPFVLEIKRPRKRNIDIKDIENRLNSISRWLKFELNMFVDRDFVSRVKKGCRTSYKIYRAIVVADRDIGIEDIKRLEEFFRDRIIEQRTPTRVLRRKKDVLRRRKVFEIKTRVISPRVFEALIKCEGGLYVKELISGDNGRTVPSFSSVLNANTLCLTLDALYVHEYI.

The active-site Nucleophile is the Asp253. The substrate site is built by Tyr320 and Tyr392.

This sequence belongs to the pseudouridine synthase Pus10 family.

It carries out the reaction uridine(54) in tRNA = pseudouridine(54) in tRNA. The enzyme catalyses uridine(55) in tRNA = pseudouridine(55) in tRNA. Its function is as follows. Responsible for synthesis of pseudouridine from uracil-54 and uracil-55 in the psi GC loop of transfer RNAs. In Ignisphaera aggregans (strain DSM 17230 / JCM 13409 / AQ1.S1), this protein is tRNA pseudouridine synthase Pus10.